The primary structure comprises 695 residues: Lysophospholipase 2 (695 aa).

An N-terminal signal peptide occupies residues 1–19 (MQLSVLIASVLAAGAAVDA). N-linked (GlcNAc...) asparagine glycans are attached at residues Asn26, Asn72, Asn83, Asn115, Asn152, Asn171, Asn207, Asn269, Asn335, Asn379, Asn480, Asn504, Asn513, Asn532, Asn556, Asn573, Asn620, Asn626, Asn644, and Asn648. The 550-residue stretch at 28–577 (SCPDNANFIR…TNYCWNGTID (550 aa)) folds into the PLA2c domain. A disordered region spans residues 612–662 (NTGSGTKSNSSSKTNSTLVTSSRATSTGTLISNSSSNSTVSSTAARSSTSS).

The protein belongs to the lysophospholipase family.

It is found in the secreted. It localises to the cell wall. It carries out the reaction a 1-acyl-sn-glycero-3-phosphocholine + H2O = sn-glycerol 3-phosphocholine + a fatty acid + H(+). Functionally, catalyzes the release of fatty acids from lysophospholipids. Phospholipase B may well contribute to pathogenicity by abetting the fungus in damaging and traversing host cell membranes, processes which likely increase the rapidity of disseminated infection. The polypeptide is Lysophospholipase 2 (Candida glabrata (strain ATCC 2001 / BCRC 20586 / JCM 3761 / NBRC 0622 / NRRL Y-65 / CBS 138) (Yeast)).